The primary structure comprises 309 residues: MSQAIREATHAGSWYLDDTELLTKQLKSFIKNPTPETGKRFVISPHAGYMYSGKVASQGFQQLDFSKIQRVFVFGPSHHIFTRKCLVSRASICSTPLGDLKVDEDLCQKLVASDNSFDSMTLDVDESEHSLEMQFPLLAFHLLKQGCLGKVKIVPIMIGALTSTTMMAAAKFLSQYIKDESNSFVISSDFCHWGRRFGYTLYLNDTNQLEDAVLKYKRRGGPTSPKIYESISNLDHIGMKIIETKSSDDFSEYLKTTQNTICGRYPIELIMKSMECANFSERFKFISYAQSSHVELVTDSSVSYATATA.

The protein belongs to the MEMO1 family.

This chain is MEMO1 family protein C4H3.04c, found in Schizosaccharomyces pombe (strain 972 / ATCC 24843) (Fission yeast).